Reading from the N-terminus, the 586-residue chain is Madf and zinc finger protein 1 (586 aa).

Residues 161-194 (FMSEDDLAPPRKPGRPPRRTRPGQVFKFKVSFIR) are involved in interaction with Cp190. A DNA-binding region (MADF 1) is located at residues 201–292 (HLIQAYKEHP…KCEFLSVAPV (92 aa)). Residues 294–319 (TPRENEEDNDLTAIKLNFKEENLITT) are involved in interaction with Cp190. A DNA-binding region (MADF 2) is located at residues 320–413 (SFIETYANYP…MCSFLPAKGS (94 aa)). C2H2-type zinc fingers lie at residues 418-441 (LYCD…VKAH), 448-471 (YLCS…LRSH), 476-498 (LKCQ…TLIH), 504-527 (HVCD…NGVH), 533-555 (YSCN…IKGH), and 561-583 (KKCE…RRSH).

In terms of assembly, interacts (via regions flanking MADF domain 1) with Cp190 (via regions between the BTB domain and first zinc finger domain); the interaction is probably direct and is essential for protein function.

Its subcellular location is the nucleus. The protein localises to the chromosome. It is found in the nucleoplasm. In terms of biological role, chromatin-binding protein involved in the organization of active promoters and insulators. Essential for the activity of heterochromatin promoters; primarily binds to specific motifs within promoters of housekeeping genes. May also associate to a lesser extent with promoters in euchromatin. Mediates recruitment of Cp190, a multifunctional protein involved in the recruitment of transcription complexes, the creation of open chromatin regions and the activity of insulators. Cooperates with pita and su(Hw) to recruit Cp190 and regulate insulator function at the front-ultraabdominal (Fub) boundary. May cooperate with other C2H2 zinc finger proteins, such as M1BP, to recruit CP190 to promoters. May be involved in cellular organization and development of the eye. This chain is Madf and zinc finger protein 1, found in Drosophila melanogaster (Fruit fly).